A 361-amino-acid chain; its full sequence is SUN domain-containing protein 3 (361 aa).

The Nuclear segment spans residues 1–47 (MSGKAKARRAAMFFRGCSEDASGSTSGSTLLSEDENPDTNGVTRSWK). Residues 19 to 38 (EDASGSTSGSTLLSEDENPD) are disordered. The segment covering 22–31 (SGSTSGSTLL) has biased composition (low complexity). A helical transmembrane segment spans residues 48–69 (IILSTMFTLTFLLVGLLSHQWL). Topologically, residues 70-361 (KETEVPQKSR…RVHGTPGKHI (292 aa)) are perinuclear space. Residues 103–129 (KEQLELLKKESQTLENNFHKILLLIEQ) are a coiled coil. One can recognise an SUN domain in the interval 197 to 358 (GASIIEAGTS…YRFRVHGTPG (162 aa)).

In terms of assembly, self-associates. Interacts with SYNE1 and SPAG4/SUN4. Proposed to form a spermatogenesis-specific LINC complex with SYNE1 during sperm head formation possibly implicating a SUN domain-based heterotrimer with SPAG4/SUN4 associating with SYNE1.

The protein resides in the membrane. The protein localises to the nucleus envelope. It is found in the nucleus inner membrane. In terms of biological role, as a probable component of the LINC (LInker of Nucleoskeleton and Cytoskeleton) complex, involved in the connection between the nuclear lamina and the cytoskeleton. The nucleocytoplasmic interactions established by the LINC complex play an important role in the transmission of mechanical forces across the nuclear envelope and in nuclear movement and positioning. May be involved in nuclear remodeling during sperm head formation in spermatogenesis. A probable SUN3:SYNE1 LINC complex may tether spermatid nuclei to posterior cytoskeletal structures such as the manchette. The sequence is that of SUN domain-containing protein 3 (SUN3) from Macaca fascicularis (Crab-eating macaque).